Here is a 52-residue protein sequence, read N- to C-terminus: ERMES regulator 1 (52 aa).

The Mitochondrial intermembrane segment spans residues 1–27; sequence MIFFFNQIRSIFTALHTPTQQIQLSRR. The helical transmembrane segment at 28-46 threads the bilayer; the sequence is AFFQFLGYLGSCVVISLAA. Over 47 to 52 the chain is Cytoplasmic; the sequence is QSKYVQ.

The protein belongs to the EMR1 family.

The protein resides in the mitochondrion outer membrane. In terms of biological role, mediates the formation of endoplasmic reticulum (ER)-mitochondria encounter structure (ERMES) foci, thereby contributing to the formation of ER-mitochondrial contact sites. This chain is ERMES regulator 1, found in Saccharomyces cerevisiae (strain ATCC 204508 / S288c) (Baker's yeast).